Reading from the N-terminus, the 292-residue chain is AKT-interacting protein homolog B (292 aa).

Positions 1–44 (MNPFWNMPSASVRKRSDNDEKIATADQKISPARSSSAKKQLPSI) are disordered. A compositionally biased stretch (basic and acidic residues) spans 14–23 (KRSDNDEKIA). The UBC core domain occupies 75–223 (YLEYSLLAEF…VVDSVKLCNS (149 aa)).

The protein belongs to the ubiquitin-conjugating enzyme family. FTS subfamily.

It is found in the cytoplasm. Its subcellular location is the cell membrane. Its function is as follows. May function to promote vesicle trafficking and/or fusion. May also regulate apoptosis. This is AKT-interacting protein homolog B (aktip-b) from Xenopus laevis (African clawed frog).